We begin with the raw amino-acid sequence, 503 residues long: Carboxyl-terminal PDZ ligand of neuronal nitric oxide synthase protein (503 aa).

The PID domain maps to 26–191 (FQHGISFEAK…ESERNSDGSG (166 aa)). Residues 170–212 (HTQQNADGQEDGESERNSDGSGDPGRQLTGAERVSTATAEETD) form a disordered region. Residues Ser-183, Ser-187, Ser-190, and Ser-262 each carry the phosphoserine modification. A disordered region spans residues 266 to 285 (LLPSSSSSKPPGLGTGTPLS). A coiled-coil region spans residues 319-360 (AAEAAARLEAQARVHQLLLQNKDMLQHISLLVKQVQELELKL). A phosphoserine mark is found at Ser-368, Ser-371, Ser-398, and Ser-414. Positions 491–503 (QELGDSLDDEIAV) are interaction with NOS1. The PDZ-binding motif lies at 501 to 503 (IAV).

As to quaternary structure, interacts with the PDZ domain of NOS1 or the second PDZ domain of DLG4 through its C-terminus. Interacts with RASD1 and SYN1, SYN2 and SYN3 via its PID domain. Forms a ternary complex with NOS1 and RASD1. Forms a ternary complex with NOS1 and SYN1. In terms of tissue distribution, mainly expressed in brain. Highly expressed in accessory olfactory bulb, caudate-putamen, cerebellum, cerebral cortex, dentate gyrus of the hippocampus, islands of Calleja, olfactory bulb and supraoptic nucleus. Expressed in kidney glomeruli podocytes (at protein level).

Its subcellular location is the cell projection. The protein localises to the filopodium. It is found in the podosome. Adapter protein involved in neuronal nitric-oxide (NO) synthesis regulation via its association with nNOS/NOS1. The complex formed with NOS1 and synapsins is necessary for specific NO and synapsin functions at a presynaptic level. Mediates an indirect interaction between NOS1 and RASD1 leading to enhance the ability of NOS1 to activate RASD1. Competes with DLG4 for interaction with NOS1, possibly affecting NOS1 activity by regulating the interaction between NOS1 and DLG4. In kidney podocytes, plays a role in podosomes and filopodia formation through CDC42 activation. The sequence is that of Carboxyl-terminal PDZ ligand of neuronal nitric oxide synthase protein from Rattus norvegicus (Rat).